A 355-amino-acid chain; its full sequence is UDP-N-acetylglucosamine--N-acetylmuramyl-(pentapeptide) pyrophosphoryl-undecaprenol N-acetylglucosamine transferase (355 aa).

Residues 15–17 (TGG), Asn-127, Arg-163, Ser-191, Ile-245, 264–269 (ALTVSE), and Gln-289 contribute to the UDP-N-acetyl-alpha-D-glucosamine site.

The protein belongs to the glycosyltransferase 28 family. MurG subfamily.

The protein localises to the cell inner membrane. It catalyses the reaction di-trans,octa-cis-undecaprenyl diphospho-N-acetyl-alpha-D-muramoyl-L-alanyl-D-glutamyl-meso-2,6-diaminopimeloyl-D-alanyl-D-alanine + UDP-N-acetyl-alpha-D-glucosamine = di-trans,octa-cis-undecaprenyl diphospho-[N-acetyl-alpha-D-glucosaminyl-(1-&gt;4)]-N-acetyl-alpha-D-muramoyl-L-alanyl-D-glutamyl-meso-2,6-diaminopimeloyl-D-alanyl-D-alanine + UDP + H(+). It participates in cell wall biogenesis; peptidoglycan biosynthesis. Its function is as follows. Cell wall formation. Catalyzes the transfer of a GlcNAc subunit on undecaprenyl-pyrophosphoryl-MurNAc-pentapeptide (lipid intermediate I) to form undecaprenyl-pyrophosphoryl-MurNAc-(pentapeptide)GlcNAc (lipid intermediate II). The sequence is that of UDP-N-acetylglucosamine--N-acetylmuramyl-(pentapeptide) pyrophosphoryl-undecaprenol N-acetylglucosamine transferase from Yersinia enterocolitica serotype O:8 / biotype 1B (strain NCTC 13174 / 8081).